The chain runs to 255 residues: Imidazole glycerol phosphate synthase subunit HisF (255 aa).

Catalysis depends on residues Asp11 and Asp130.

Belongs to the HisA/HisF family. In terms of assembly, heterodimer of HisH and HisF.

It is found in the cytoplasm. It catalyses the reaction 5-[(5-phospho-1-deoxy-D-ribulos-1-ylimino)methylamino]-1-(5-phospho-beta-D-ribosyl)imidazole-4-carboxamide + L-glutamine = D-erythro-1-(imidazol-4-yl)glycerol 3-phosphate + 5-amino-1-(5-phospho-beta-D-ribosyl)imidazole-4-carboxamide + L-glutamate + H(+). Its pathway is amino-acid biosynthesis; L-histidine biosynthesis; L-histidine from 5-phospho-alpha-D-ribose 1-diphosphate: step 5/9. In terms of biological role, IGPS catalyzes the conversion of PRFAR and glutamine to IGP, AICAR and glutamate. The HisF subunit catalyzes the cyclization activity that produces IGP and AICAR from PRFAR using the ammonia provided by the HisH subunit. The polypeptide is Imidazole glycerol phosphate synthase subunit HisF (Syntrophotalea carbinolica (strain DSM 2380 / NBRC 103641 / GraBd1) (Pelobacter carbinolicus)).